The chain runs to 341 residues: D-aspartate oxidase (341 aa).

The FAD site is built by aspartate 36, lysine 37, threonine 43, serine 44, methionine 50, glycine 307, and isoleucine 311. The Microbody targeting signal signature appears at 339-341 (SKL).

The protein belongs to the DAMOX/DASOX family. Homotetramer. Interacts with PEX5; the interaction is direct and required for localization of DDO to the peroxisome. The cofactor is FAD. In terms of tissue distribution, expressed in epithelial cells of the renal proximal tubules (not detected in the glomeruli or renal distal tubules), liver, right atrium of heart, lung, chief cells of the gastric mucosa, choroid plexus, pia mater, brain stem, midbrain, pons, medulla oblongata, hypothalamus, hippocampus, cerebral cortex, cerebellum, ependyma, olfactory bulb and the pituitary, pineal, thyroid and adrenal glands (at protein level).

It is found in the peroxisome matrix. The protein localises to the cytoplasm. Its subcellular location is the cytosol. It catalyses the reaction D-aspartate + O2 + H2O = oxaloacetate + H2O2 + NH4(+). It carries out the reaction D-glutamate + O2 + H2O = H2O2 + 2-oxoglutarate + NH4(+). Its function is as follows. Selectively catalyzes the oxidative deamination of acidic amino acids. Suppresses the level of D-aspartate in the brain, an amino acid that can act as an agonist for glutamate receptors. Protects the organism from the toxicity of D-amino acids. May also function in the intestine. This is D-aspartate oxidase (DDO) from Sus scrofa (Pig).